Here is a 113-residue protein sequence, read N- to C-terminus: Small ribosomal subunit protein eS24 (113 aa).

Belongs to the eukaryotic ribosomal protein eS24 family.

The chain is Small ribosomal subunit protein eS24 from Metallosphaera sedula (strain ATCC 51363 / DSM 5348 / JCM 9185 / NBRC 15509 / TH2).